The following is a 453-amino-acid chain: MKLLTRAGSLSRFYSLKVAPKVKATEAPAGVPPHPQDLEFTRLPNGLVIASLENYAPASRIGLFIKAGSRYENSNNLGTSHLLRLASSLTTKGASSFKITRGIEAVGGKLSVTSTRENMAYTVECLRDDVDILMEFLLNVTTAPEFRRWEVAALQPQLRIDKAVALQNPQAHVIENLHAAAYRNALANSLYCPDYRIGKVTPVELHDYVQNHFTSARMALIGLGVSHPVLKQVAEQFLNIRGGLGLSGAKAKYHGGEIREQNGDSLVHAALVAESAAIGSAEANAFSVLQHVLGAGPHVKRGSNATSSLYQAVAKGVHQPFDVSAFNASYSDSGLFGFYTISQAASAGDVIKAAYNQVKTIAQGNLSNPDVQAAKNKLKAGYLMSVESSEGFLDEVGSQALAAGSYTPPSTVLQQIDAVADADVINAAKKFVSGRKSMAASGNLGHTPFIDEL.

The transit peptide at Met1–Tyr14 directs the protein to the mitochondrion. An N6-acetyllysine mark is found at Lys66, Lys199, and Lys250.

The protein belongs to the peptidase M16 family. UQCRC2/QCR2 subfamily. Component of the ubiquinol-cytochrome c oxidoreductase (cytochrome b-c1 complex, complex III, CIII), a multisubunit enzyme composed of 11 subunits. The complex is composed of 3 respiratory subunits cytochrome b, cytochrome c1 and Rieske protein UQCRFS1, 2 core protein subunits UQCRC1/QCR1 and UQCRC2/QCR2, and 6 low-molecular weight protein subunits UQCRH/QCR6, UQCRB/QCR7, UQCRQ/QCR8, UQCR10/QCR9, UQCR11/QCR10 and subunit 9, the cleavage product of Rieske protein UQCRFS1. The complex exists as an obligatory dimer and forms supercomplexes (SCs) in the inner mitochondrial membrane with NADH-ubiquinone oxidoreductase (complex I, CI) and cytochrome c oxidase (complex IV, CIV), resulting in different assemblies (supercomplex SCI(1)III(2)IV(1) and megacomplex MCI(2)III(2)IV(2)). Interacts with RAB5IF. Interacts with STMP1.

Its subcellular location is the mitochondrion inner membrane. In terms of biological role, component of the ubiquinol-cytochrome c oxidoreductase, a multisubunit transmembrane complex that is part of the mitochondrial electron transport chain which drives oxidative phosphorylation. The respiratory chain contains 3 multisubunit complexes succinate dehydrogenase (complex II, CII), ubiquinol-cytochrome c oxidoreductase (cytochrome b-c1 complex, complex III, CIII) and cytochrome c oxidase (complex IV, CIV), that cooperate to transfer electrons derived from NADH and succinate to molecular oxygen, creating an electrochemical gradient over the inner membrane that drives transmembrane transport and the ATP synthase. The cytochrome b-c1 complex catalyzes electron transfer from ubiquinol to cytochrome c, linking this redox reaction to translocation of protons across the mitochondrial inner membrane, with protons being carried across the membrane as hydrogens on the quinol. In the process called Q cycle, 2 protons are consumed from the matrix, 4 protons are released into the intermembrane space and 2 electrons are passed to cytochrome c. The 2 core subunits UQCRC1/QCR1 and UQCRC2/QCR2 are homologous to the 2 mitochondrial-processing peptidase (MPP) subunits beta-MPP and alpha-MPP respectively, and they seem to have preserved their MPP processing properties. May be involved in the in situ processing of UQCRFS1 into the mature Rieske protein and its mitochondrial targeting sequence (MTS)/subunit 9 when incorporated into complex III. This Bos taurus (Bovine) protein is Cytochrome b-c1 complex subunit 2, mitochondrial (UQCRC2).